A 126-amino-acid chain; its full sequence is Prostate and testis expressed protein 1 (126 aa).

An N-terminal signal peptide occupies residues 1–21 (MDKSLLLELPILLCCFRALSG). A UPAR/Ly6 domain is found at 46–125 (VQCRMCHLQF…CRSHDLCNED (80 aa)). Disulfide bonds link C48/C75, C51/C60, C67/C94, and C98/C115.

Belongs to the PATE family. As to expression, expressed specifically in prostate cancer, normal prostate, and testis. Expressed in the epithelial cells of the prostate cancer and normal prostate tissues.

It is found in the secreted. In Homo sapiens (Human), this protein is Prostate and testis expressed protein 1 (PATE1).